A 320-amino-acid polypeptide reads, in one-letter code: Glyoxylate/hydroxypyruvate reductase B (320 aa).

Active-site residues include arginine 233 and glutamate 262. The Proton donor role is filled by histidine 281.

The protein belongs to the D-isomer specific 2-hydroxyacid dehydrogenase family. GhrB subfamily. Homodimer.

The protein resides in the cytoplasm. The enzyme catalyses glycolate + NADP(+) = glyoxylate + NADPH + H(+). It carries out the reaction (R)-glycerate + NAD(+) = 3-hydroxypyruvate + NADH + H(+). The catalysed reaction is (R)-glycerate + NADP(+) = 3-hydroxypyruvate + NADPH + H(+). Its function is as follows. Catalyzes the NADPH-dependent reduction of glyoxylate and hydroxypyruvate into glycolate and glycerate, respectively. The protein is Glyoxylate/hydroxypyruvate reductase B of Pectobacterium atrosepticum (strain SCRI 1043 / ATCC BAA-672) (Erwinia carotovora subsp. atroseptica).